Consider the following 132-residue polypeptide: UPF0102 protein Ajs_0414 (132 aa).

The tract at residues 1 to 23 (MGFLGKKVNGSAPARTTRAAGQA) is disordered.

Belongs to the UPF0102 family.

This is UPF0102 protein Ajs_0414 from Acidovorax sp. (strain JS42).